The primary structure comprises 523 residues: Major facilitator-type transporter psiT2 (523 aa).

The segment covering 1-26 (MSLERSTSPNPTERTSLLSDTASTIS) has biased composition (polar residues). The disordered stretch occupies residues 1–45 (MSLERSTSPNPTERTSLLSDTASTISSRDDVEQSSLKQRRTPIPT). The next 5 membrane-spanning stretches (helical) occupy residues 88–108 (FYSG…IFML), 125–145 (ALGI…TMML), 149–169 (VCAG…SELT), 175–195 (ALVV…GPLI), and 221–241 (FLPS…GYFF). N-linked (GlcNAc...) asparagine glycosylation is present at asparagine 269. The next 3 helical transmembrane spans lie at 317-337 (FLMF…FTAV), 352-372 (AFSV…PWVL), and 382-402 (HFCM…NPLA). N-linked (GlcNAc...) asparagine glycosylation is present at asparagine 410. Transmembrane regions (helical) follow at residues 419 to 439 (GLLY…VMAF), 455 to 474 (LATA…AFCP), and 488 to 508 (NILG…VGVW).

This sequence belongs to the major facilitator superfamily. TCR/Tet family.

The protein localises to the membrane. Its function is as follows. Major facilitator-type transporter; part of the gene cluster that mediates the biosynthesis of psilocybin, a psychotropic tryptamine-derived natural product. This chain is Major facilitator-type transporter psiT2, found in Psilocybe cubensis (Psychedelic mushroom).